A 376-amino-acid chain; its full sequence is MHTILLVVFMIILGAIIGGVTNMIAIKMLFHPFKPYYIFRFRIPFTPGLIPKRREEIARKIGQVIEEHLITEELIRQKLNQPQSRNMIQQLIHKQISKLKNDDVTIKKIAGFLGIDVNELVDYKLTTKFLNKLNFWYESNKYRKLSEILPQSFLDQCKGQIEYITDFLCERARNYLSSEKGERDIYELLDTFFNEKGRIIGLLQMFMTKESIADRIQHELIRLTQHPQSQKIITKVLNDEYETFKDKNLDEIIKEQQFKNYSQLVLNELKTYLNLKDKTERPIKQVVPQFIQFLEDDTSKRMTDFIIKGTSKHLTNIMKKINLRQLVEEQINTFDLKYIENLIIDIANKELKLIMTLGFILGGIIGFFQGVIAIFV.

The next 2 helical transmembrane spans lie at 4-24 (ILLVVFMIILGAIIGGVTNMI) and 356-376 (TLGFILGGIIGFFQGVIAIFV).

This sequence belongs to the UPF0754 family.

The protein localises to the cell membrane. This is UPF0754 membrane protein SERP1382 from Staphylococcus epidermidis (strain ATCC 35984 / DSM 28319 / BCRC 17069 / CCUG 31568 / BM 3577 / RP62A).